The primary structure comprises 147 residues: Protein phosphatase 1 regulatory subunit 14A (147 aa).

Positions 1–11 (MAAQRLGKRVL) are enriched in basic residues. Residues 1–37 (MAAQRLGKRVLSKLQSPSRARGPGGSPSGLQKRHARV) are disordered. Ser26 is subject to Phosphoserine. The segment at 35–120 (ARVTVKYDRR…LLAKLRGLHK (86 aa)) is inhibitory. Thr38 carries the phosphothreonine modification. The disordered stretch occupies residues 118–147 (LHKQPGFPQPSPSDDPSLSPRQDPAHTAPP). Ser128, Ser134, and Ser136 each carry phosphoserine.

Belongs to the PP1 inhibitor family.

The protein resides in the cytoplasm. Inhibitor of PPP1CA. Has over 1000-fold higher inhibitory activity when phosphorylated, creating a molecular switch for regulating the phosphorylation status of PPP1CA substrates and smooth muscle contraction. The sequence is that of Protein phosphatase 1 regulatory subunit 14A (Ppp1r14a) from Rattus norvegicus (Rat).